A 275-amino-acid polypeptide reads, in one-letter code: Large ribosomal subunit protein uL2 (275 aa).

The span at 35–49 (DSQSSTAGRNNNGRI) shows a compositional bias: polar residues. Disordered regions lie at residues 35 to 59 (DSQS…GGHK) and 224 to 275 (AMNP…RHKR). The span at 50-59 (TTRHKGGGHK) shows a compositional bias: basic residues.

The protein belongs to the universal ribosomal protein uL2 family. In terms of assembly, part of the 50S ribosomal subunit. Forms a bridge to the 30S subunit in the 70S ribosome.

In terms of biological role, one of the primary rRNA binding proteins. Required for association of the 30S and 50S subunits to form the 70S ribosome, for tRNA binding and peptide bond formation. It has been suggested to have peptidyltransferase activity; this is somewhat controversial. Makes several contacts with the 16S rRNA in the 70S ribosome. This chain is Large ribosomal subunit protein uL2, found in Burkholderia orbicola (strain AU 1054).